The primary structure comprises 454 residues: GTPase Der (454 aa).

EngA-type G domains follow at residues Ala-4–Lys-167 and Leu-188–Gln-363. GTP-binding positions include Gly-10–Ser-17, Asp-56–Leu-60, Asn-121–Glu-124, Gly-194–Ser-201, Asp-241–Val-245, and Asn-306–Asp-309. The KH-like domain occupies Lys-364–Lys-450.

It belongs to the TRAFAC class TrmE-Era-EngA-EngB-Septin-like GTPase superfamily. EngA (Der) GTPase family. Associates with the 50S ribosomal subunit.

Its function is as follows. GTPase that plays an essential role in the late steps of ribosome biogenesis. In Orientia tsutsugamushi (strain Ikeda) (Rickettsia tsutsugamushi), this protein is GTPase Der.